The chain runs to 294 residues: GTPase Era (294 aa).

An Era-type G domain is found at 4 to 170; sequence KSGFVSVIGR…VEEIFTFLPE (167 aa). Residues 12-19 are G1; it reads GRPNVGKS. Position 12–19 (12–19) interacts with GTP; it reads GRPNVGKS. Residues 38–42 form a G2 region; that stretch reads QTTRN. The tract at residues 59–62 is G3; that stretch reads DTPG. Residues 59-63 and 121-124 each bind GTP; these read DTPGI and NKID. The interval 121–124 is G4; that stretch reads NKID. The tract at residues 149-151 is G5; it reads ISA. The 78-residue stretch at 201 to 278 folds into the KH type-2 domain; that stretch reads TREEVPYGVA…YLDLWVKIEK (78 aa).

This sequence belongs to the TRAFAC class TrmE-Era-EngA-EngB-Septin-like GTPase superfamily. Era GTPase family. As to quaternary structure, monomer.

It is found in the cytoplasm. The protein localises to the cell inner membrane. Functionally, an essential GTPase that binds both GDP and GTP, with rapid nucleotide exchange. Plays a role in 16S rRNA processing and 30S ribosomal subunit biogenesis and possibly also in cell cycle regulation and energy metabolism. This is GTPase Era from Halothermothrix orenii (strain H 168 / OCM 544 / DSM 9562).